Here is a 712-residue protein sequence, read N- to C-terminus: Aryl hydrocarbon receptor nuclear translocator 2 (712 aa).

Disordered stretches follow at residues 1-20 and 35-74; these read MATP…PGSV and MAGA…IERR. Omega-N-methylarginine is present on Arg42. The segment covering 63–73 has biased composition (basic and acidic residues); that stretch reads FSRENHSEIER. The 54-residue stretch at 63 to 116 folds into the bHLH domain; it reads FSRENHSEIERRRRNKMTQYITELSDMVPTCSALARKPDKLTILRMAVSHMKSM. 2 consecutive PAS domains span residues 134-209 and 323-393; these read TEQE…MTGR and PVCM…VKLK. Residues 398–441 form the PAC domain; sequence SVMYRFRTKNREWLLIRTSSFTFQNPYSDEIEYVICTNTNVKQL. The interval 573-712 is disordered; it reads AWTGSRPPFP…DLGMFPPFSE (140 aa). Composition is skewed to low complexity over residues 597-626 and 653-675; these read SSHP…AYPS and SQWQ…QPGQ.

In terms of assembly, efficient DNA binding requires dimerization with another bHLH protein. Heterodimer with NPAS4 or SIM1. Heterodimer with the aryl hydrocarbon receptor (AHR) or the SIM1 protein. Interacts with TACC3.

It localises to the nucleus. In terms of biological role, transcription factor that plays a role in the development of the hypothalamo-pituitary axis, postnatal brain growth, and visual and renal function. Specifically recognizes the xenobiotic response element (XRE). The sequence is that of Aryl hydrocarbon receptor nuclear translocator 2 (Arnt2) from Rattus norvegicus (Rat).